Here is a 264-residue protein sequence, read N- to C-terminus: MAATGEALTPQGYIQHHLTNLHVGEGFWTWHIDSLFFSVGLGVLFLWLFRSVGKKATTGVPGKLQCFIEMIVEFVDGSVKETFHGRNPVIAPLALTIFVWVFMMNFMDMIPVDWLPWAAGLAGITHLKVVPTTDLNITFSLALGVFVLIIYYSIKVKGVSGFVKELTLQPFNHKAMIPVNLLLESVTLIAKPISLALRLFGNLYAGELIFILIALMYGANLALSALGVTLQLGWLIFHILVITLQAFIFMMLTIVYLSMAHEDH.

6 helical membrane passes run 29 to 49 (TWHI…LWLF), 90 to 110 (IAPL…MDMI), 134 to 154 (DLNI…YYSI), 177 to 197 (IPVN…SLAL), 208 to 228 (LIFI…ALGV), and 235 to 255 (LIFH…LTIV).

This sequence belongs to the ATPase A chain family. F-type ATPases have 2 components, CF(1) - the catalytic core - and CF(0) - the membrane proton channel. CF(1) has five subunits: alpha(3), beta(3), gamma(1), delta(1), epsilon(1). CF(0) has three main subunits: a(1), b(2) and c(9-12). The alpha and beta chains form an alternating ring which encloses part of the gamma chain. CF(1) is attached to CF(0) by a central stalk formed by the gamma and epsilon chains, while a peripheral stalk is formed by the delta and b chains.

The protein resides in the cell inner membrane. In terms of biological role, key component of the proton channel; it plays a direct role in the translocation of protons across the membrane. The chain is ATP synthase subunit a from Shewanella loihica (strain ATCC BAA-1088 / PV-4).